Reading from the N-terminus, the 300-residue chain is 11-beta-hydroxysteroid dehydrogenase 1 (300 aa).

Residues methionine 1 to tyrosine 7 are Cytoplasmic-facing. The helical; Signal-anchor for type II membrane protein transmembrane segment at leucine 8 to asparagine 24 threads the bilayer. Residues glutamate 25–alanine 300 are Lumenal-facing. Residues glycine 41–serine 67, serine 92–methionine 93, and asparagine 119–tyrosine 123 each bind NADP(+). A substrate-binding site is contributed by serine 170. Catalysis depends on tyrosine 183, which acts as the Proton acceptor. Tyrosine 183–lysine 187 lines the NADP(+) pocket. An N-linked (GlcNAc...) asparagine glycan is attached at asparagine 207. Isoleucine 218–threonine 222 contributes to the NADP(+) binding site.

The protein belongs to the short-chain dehydrogenases/reductases (SDR) family. As to quaternary structure, homodimer. As to expression, widely expressed in all peripheral tissues, with highest expression in liver, followed by kidney and lung, and very low expression in heart, lung, spleen, stomach, small intestine, colon, skin, skeletal muscle, and ovary.

Its subcellular location is the endoplasmic reticulum membrane. It carries out the reaction an 11beta-hydroxysteroid + NADP(+) = an 11-oxosteroid + NADPH + H(+). The enzyme catalyses cortisone + NADPH + H(+) = cortisol + NADP(+). The catalysed reaction is corticosterone + NADP(+) = 11-dehydrocorticosterone + NADPH + H(+). It catalyses the reaction a 7beta-hydroxysteroid + NADP(+) = a 7-oxosteroid + NADPH + H(+). It carries out the reaction 7-oxocholesterol + NADPH + H(+) = 7beta-hydroxycholesterol + NADP(+). The enzyme catalyses chenodeoxycholate + NADP(+) = 7-oxolithocholate + NADPH + H(+). The catalysed reaction is 7-oxolithocholate + NADPH + H(+) = ursodeoxycholate + NADP(+). It catalyses the reaction glycochenodeoxycholate + NADP(+) = 7-oxoglycolithocholate + NADPH + H(+). It carries out the reaction taurochenodeoxycholate + NADP(+) = 7-oxotaurolithocholate + NADPH + H(+). The enzyme catalyses tauroursodeoxycholate + NADP(+) = 7-oxotaurolithocholate + NADPH + H(+). The catalysed reaction is glycoursodeoxycholate + NADP(+) = 7-oxoglycolithocholate + NADPH + H(+). It catalyses the reaction 7-oxopregnenolone + NADPH + H(+) = 7beta-hydroxypregnenolone + NADP(+). It carries out the reaction 3beta,7alpha-dihydroxyandrost-5-en-17-one + NADP(+) = 3beta-hydroxy-5-androstene-7,17-dione + NADPH + H(+). The enzyme catalyses 3beta-hydroxy-5-androstene-7,17-dione + NADPH + H(+) = 3beta,7beta-dihydroxyandrost-5-en-17-one + NADP(+). The catalysed reaction is 3beta-hydroxy-5alpha-androstane-7,17-dione + NADPH + H(+) = 3beta,7beta-dihydroxy-5alpha-androstan-17-one + NADP(+). Its function is as follows. Controls the reversible conversion of biologically active glucocorticoids such as cortisone to cortisol, and 11-dehydrocorticosterone to corticosterone in the presence of NADP(H). Participates in the corticosteroid receptor-mediated anti-inflammatory response, as well as metabolic and homeostatic processes. Bidirectional in vitro, predominantly functions as a reductase in vivo, thereby increasing the concentration of active glucocorticoids. It has broad substrate specificity, besides glucocorticoids, it accepts other steroid and sterol substrates. Interconverts 7-oxo- and 7-hydroxy-neurosteroids such as 7-oxopregnenolone and 7beta-hydroxypregnenolone, 7-oxodehydroepiandrosterone (3beta-hydroxy-5-androstene-7,17-dione) and 7beta-hydroxydehydroepiandrosterone (3beta,7beta-dihydroxyandrost-5-en-17-one), among others. Catalyzes the stereo-specific conversion of the major dietary oxysterol, 7-ketocholesterol (7-oxocholesterol), into the more polar 7-beta-hydroxycholesterol metabolite. 7-oxocholesterol is one of the most important oxysterols, it participates in several events such as induction of apoptosis, accumulation in atherosclerotic lesions, lipid peroxidation, and induction of foam cell formation. Mediates the 7-oxo reduction of 7-oxolithocholate mainly to chenodeoxycholate, and to a lesser extent to ursodeoxycholate, both in its free form and when conjugated to glycine or taurine, providing a link between glucocorticoid activation and bile acid metabolism. Catalyzes the synthesis of 7-beta-25-dihydroxycholesterol from 7-oxo-25-hydroxycholesterol in vitro, which acts as a ligand for the G-protein-coupled receptor (GPCR) Epstein-Barr virus-induced gene 2 (EBI2) and may thereby regulate immune cell migration. The polypeptide is 11-beta-hydroxysteroid dehydrogenase 1 (HSD11B1) (Cavia porcellus (Guinea pig)).